A 433-amino-acid polypeptide reads, in one-letter code: UPF0761 membrane protein Sde_0901 (433 aa).

6 consecutive transmembrane segments (helical) span residues 46–66, 103–123, 142–162, 185–205, 217–237, and 247–267; these read LFAM…FPAF, LSAA…TNIE, FLLY…GLAM, FFSY…FAAV, IGGI…GWVV, and GAFA…MIIL.

The protein belongs to the UPF0761 family.

The protein resides in the cell inner membrane. The protein is UPF0761 membrane protein Sde_0901 of Saccharophagus degradans (strain 2-40 / ATCC 43961 / DSM 17024).